The following is a 399-amino-acid chain: Protein HYM1 (399 aa).

Residues 363–382 show a composition bias toward low complexity; the sequence is VSNNNASSSNVASITSPSSV. Positions 363-399 are disordered; sequence VSNNNASSSNVASITSPSSVMNNQSSILTHSTSPDSR. Residues 383-399 show a composition bias toward polar residues; the sequence is MNNQSSILTHSTSPDSR.

It belongs to the Mo25 family.

The chain is Protein HYM1 (HYM1) from Saccharomyces cerevisiae (strain ATCC 204508 / S288c) (Baker's yeast).